Reading from the N-terminus, the 247-residue chain is Adenosylcobinamide-GDP ribazoletransferase (247 aa).

The next 5 helical transmembrane spans lie at 34-54 (IITF…VFMV), 59-79 (CGVP…TGGF), 113-133 (GGLA…ELTL), 138-158 (ILAS…LLMY), and 194-214 (VLLP…AIFI).

This sequence belongs to the CobS family. The cofactor is Mg(2+).

The protein localises to the cell inner membrane. It carries out the reaction alpha-ribazole + adenosylcob(III)inamide-GDP = adenosylcob(III)alamin + GMP + H(+). It catalyses the reaction alpha-ribazole 5'-phosphate + adenosylcob(III)inamide-GDP = adenosylcob(III)alamin 5'-phosphate + GMP + H(+). It functions in the pathway cofactor biosynthesis; adenosylcobalamin biosynthesis; adenosylcobalamin from cob(II)yrinate a,c-diamide: step 7/7. Its function is as follows. Joins adenosylcobinamide-GDP and alpha-ribazole to generate adenosylcobalamin (Ado-cobalamin). Also synthesizes adenosylcobalamin 5'-phosphate from adenosylcobinamide-GDP and alpha-ribazole 5'-phosphate. The polypeptide is Adenosylcobinamide-GDP ribazoletransferase (Escherichia coli O127:H6 (strain E2348/69 / EPEC)).